The following is a 128-amino-acid chain: Large ribosomal subunit protein uL22 (128 aa).

It belongs to the universal ribosomal protein uL22 family. Part of the 50S ribosomal subunit.

Its function is as follows. This protein binds specifically to 23S rRNA; its binding is stimulated by other ribosomal proteins, e.g. L4, L17, and L20. It is important during the early stages of 50S assembly. It makes multiple contacts with different domains of the 23S rRNA in the assembled 50S subunit and ribosome. The globular domain of the protein is located near the polypeptide exit tunnel on the outside of the subunit, while an extended beta-hairpin is found that lines the wall of the exit tunnel in the center of the 70S ribosome. The protein is Large ribosomal subunit protein uL22 of Prochlorococcus marinus (strain MIT 9515).